The primary structure comprises 126 residues: NADP-reducing hydrogenase subunit HndB (126 aa).

In terms of assembly, heterotetramer composed of HndA, HndB, HndC and HndD subunits. HndA and HndB could form a heterodimeric intermediate in the electron transfer between the active site of hydrogenase subunit HndD and the NADP reduction site of the reducing subunit HndC.

The enzyme catalyses H2 + NADP(+) = NADPH + H(+). Inhibited by oxygen. Its function is as follows. Catalyzes the reduction of NADP in the presence of molecular H2 to yield NADPH. This is NADP-reducing hydrogenase subunit HndB (hndB) from Solidesulfovibrio fructosivorans (Desulfovibrio fructosivorans).